The sequence spans 103 residues: NADH-quinone oxidoreductase subunit K 1 (103 aa).

A run of 3 helical transmembrane segments spans residues 7–27 (ISWF…GFLF), 31–51 (IITV…SFVT), and 63–83 (LFTF…LAII).

Belongs to the complex I subunit 4L family. NDH-1 is composed of 14 different subunits. Subunits NuoA, H, J, K, L, M, N constitute the membrane sector of the complex.

The protein resides in the cell inner membrane. The catalysed reaction is a quinone + NADH + 5 H(+)(in) = a quinol + NAD(+) + 4 H(+)(out). Its function is as follows. NDH-1 shuttles electrons from NADH, via FMN and iron-sulfur (Fe-S) centers, to quinones in the respiratory chain. The immediate electron acceptor for the enzyme in this species is believed to be ubiquinone. Couples the redox reaction to proton translocation (for every two electrons transferred, four hydrogen ions are translocated across the cytoplasmic membrane), and thus conserves the redox energy in a proton gradient. This is NADH-quinone oxidoreductase subunit K 1 from Solibacter usitatus (strain Ellin6076).